Here is a 201-residue protein sequence, read N- to C-terminus: Anthranilate synthase component II (201 aa).

The Glutamine amidotransferase type-1 domain occupies D3–P196. L-glutamine is bound at residue G57–G59. The active-site Nucleophile; for GATase activity is C84. Residues Q88 and S134–L135 contribute to the L-glutamine site. Active-site for GATase activity residues include H170 and E172.

Tetramer of two components I and two components II.

The catalysed reaction is chorismate + L-glutamine = anthranilate + pyruvate + L-glutamate + H(+). It catalyses the reaction N-(5-phospho-beta-D-ribosyl)anthranilate + diphosphate = 5-phospho-alpha-D-ribose 1-diphosphate + anthranilate. The protein operates within amino-acid biosynthesis; L-tryptophan biosynthesis; L-tryptophan from chorismate: step 1/5. It participates in amino-acid biosynthesis; L-tryptophan biosynthesis; L-tryptophan from chorismate: step 2/5. This is Anthranilate synthase component II (trpG-TRPD) from Shigella dysenteriae.